A 713-amino-acid chain; its full sequence is Undecaprenyl-diphosphooligosaccharide--protein glycotransferase (713 aa).

Over Met1–Tyr11 the chain is Cytoplasmic. The helical transmembrane segment at Leu12–Trp35 threads the bilayer. Over Ala36–Ser96 the chain is Periplasmic. The DXD motif 1 signature appears at Ser52 to Asp54. Asp54 is a Mn(2+) binding site. The chain crosses the membrane as a helical span at residues Phe97–Glu122. The Cytoplasmic portion of the chain corresponds to Tyr123–Arg125. Residues Pro126 to Asn144 traverse the membrane as a helical segment. The Periplasmic portion of the chain corresponds to Arg145–Asp152. Asp152 contacts Mn(2+). A DXD motif 2 motif is present at residues Asp152–Asp154. The chain crosses the membrane as a helical span at residues Thr153–Lys174. Topologically, residues Lys175–Asp176 are cytoplasmic. A helical transmembrane segment spans residues Phe177–Trp192. The Periplasmic portion of the chain corresponds to Trp193–Ser197. Tyr194–Ser196 lines the [alpha-D-GalNAc-(1-&gt;4)]2-[beta-D-Glc-(1-&gt;3)]-[alpha-D-GalNAc-(1-&gt;4)]2-alpha-D-GalNAc-(1-&gt;3)-alpha-D-diNAcBac-tri-trans,hepta-cis-undecaprenyl diphosphate pocket. Residues Tyr198 to Phe215 form a helical membrane-spanning segment. Residues His216–Lys220 lie on the Cytoplasmic side of the membrane. The chain crosses the membrane as a helical span at residues Ile221–Leu233. Residues Ser234–Ala237 are Periplasmic-facing. The helical transmembrane segment at Trp238–Leu254 threads the bilayer. Over Glu255–Asn260 the chain is Cytoplasmic. Residues Phe261 to Ser278 traverse the membrane as a helical segment. Topologically, residues Gly279–Glu324 are periplasmic. Tyr291 serves as a coordination point for [alpha-D-GalNAc-(1-&gt;4)]2-[beta-D-Glc-(1-&gt;3)]-[alpha-D-GalNAc-(1-&gt;4)]2-alpha-D-GalNAc-(1-&gt;3)-alpha-D-diNAcBac-tri-trans,hepta-cis-undecaprenyl diphosphate. A TIXE motif motif is present at residues Thr313–Glu316. Residue Glu316 participates in Mn(2+) binding. A helical transmembrane segment spans residues Phe325–Leu347. Topologically, residues Arg348–Ser352 are cytoplasmic. Residues Met353 to Gly369 form a helical membrane-spanning segment. Over Gly370–Phe373 the chain is Periplasmic. Arg372 provides a ligand contact to [alpha-D-GalNAc-(1-&gt;4)]2-[beta-D-Glc-(1-&gt;3)]-[alpha-D-GalNAc-(1-&gt;4)]2-alpha-D-GalNAc-(1-&gt;3)-alpha-D-diNAcBac-tri-trans,hepta-cis-undecaprenyl diphosphate. A helical transmembrane segment spans residues Thr374 to Leu396. Residues Val397 to Asn406 lie on the Cytoplasmic side of the membrane. The chain crosses the membrane as a helical span at residues Val407–Tyr427. Residues Lys428–Ile713 are Periplasmic-facing. The segment at Trp457 to Asp459 is interacts with target acceptor peptide in protein substrate. The WWDYG motif signature appears at Trp457–Gly461. Residue Tyr462 coordinates [alpha-D-GalNAc-(1-&gt;4)]2-[beta-D-Glc-(1-&gt;3)]-[alpha-D-GalNAc-(1-&gt;4)]2-alpha-D-GalNAc-(1-&gt;3)-alpha-D-diNAcBac-tri-trans,hepta-cis-undecaprenyl diphosphate. Asn534 carries an N-linked (DATDGlc) asparagine glycan. The MI motif signature appears at Met568–Val575.

The protein belongs to the STT3 family. Mg(2+) is required as a cofactor. Requires Mn(2+) as cofactor.

It is found in the cell inner membrane. It catalyses the reaction tritrans,heptacis-undecaprenyl diphosphooligosaccharide + [protein]-L-asparagine = tritrans,heptacis-undecaprenyl diphosphate + a glycoprotein with the oligosaccharide chain attached by N-beta-D-glycosyl linkage to protein L-asparagine.. It functions in the pathway protein modification; protein glycosylation. In terms of biological role, oligosaccharyltransferase that catalyzes the transfer of a preassembled heptasaccharide from a lipid donor to an asparagine residue in nascent polypeptide chains, affording a beta-linked glycan to the asparagine side chain of target proteins. Oligosaccharyl transferase (OST) that catalyzes the initial transfer of a defined glycan (GalNAc(2)GlcGalNAc(3)Bac(NAc)(2) in eubacteria, where Bac(NAc)(2) is di-N-acetyl bacillosamine) from the lipid carrier undecaprenol-pyrophosphate to an asparagine residue within an Asp/Glu-Asn-X-Ser/Thr consensus motif in nascent polypeptide chains, the first step in protein N-glycosylation. The protein is Undecaprenyl-diphosphooligosaccharide--protein glycotransferase (pglB) of Campylobacter jejuni (strain RM1221).